Consider the following 120-residue polypeptide: MRWHCMDGGNRIVSMYLTTLYYTKEIVDEKTREQEKGKTSFLTDALLNLIYILFFSSSVFNWTRCHLFDTSVIMLHSFHEDGALTNLISHLPTTTVPQYRQLHVPFAILRSCDLKRKSKK.

Residues 40 to 62 form a helical membrane-spanning segment; sequence SFLTDALLNLIYILFFSSSVFNW.

It localises to the membrane. This is an uncharacterized protein from Saccharomyces cerevisiae (strain ATCC 204508 / S288c) (Baker's yeast).